Here is a 563-residue protein sequence, read N- to C-terminus: Benzaldehyde lyase (563 aa).

This sequence belongs to the TPP enzyme family. Requires a metal cation as cofactor. Thiamine diphosphate serves as cofactor.

The enzyme catalyses benzoin = 2 benzaldehyde. Cleavage of benzoin-anisoin acyloin linkage. The sequence is that of Benzaldehyde lyase (bznB) from Pseudomonas fluorescens.